Reading from the N-terminus, the 837-residue chain is Outer membrane usher protein HifC (837 aa).

Positions 1–26 (MKTKNFPLNKIAFACTLLLANPVAWA) are cleaved as a signal peptide. A disulfide bridge connects residues Cys-813 and Cys-833.

The protein belongs to the fimbrial export usher family.

Its subcellular location is the cell outer membrane. Essential for piliation. The chain is Outer membrane usher protein HifC (hifC) from Haemophilus influenzae.